A 318-amino-acid chain; its full sequence is MPSIKLNSGYDMPAVGFGCWKVDVDTCSEQIYRAIKTGYRLFDGAEDYANEKLVGAGVKKAIDEGIVKREDLFLTSKLWNNYHHPDNVEKALNRTLSDLQVDYVDLFLIHFPVTFKFVPLEEKYPPGFYCGKGDNFDYEDVPILETWKALEKLVKAGKIRSIGVSNFPGALLLDLLRGATIKPSVLQVEHHPYLQQPRLIEFAQSRGIAVTAYSSFGPQSFVELNQGRALNTSPLFENETIKAIAAKHGKSPAQVLLRWSSQRGIAIIPKSNTVPRLLENKDVNSFDLDEQDFADIAKLDINLRFNDPWDWDKIPIFV.

Tyr-48 acts as the Proton donor in catalysis. His-110 is a binding site for substrate. NAD(+) contacts are provided by residues 165-166, 214-223, and 270-280; these read SN, SSFGPQSFVE, and KSNTVPRLLEN.

It belongs to the aldo/keto reductase family.

The catalysed reaction is xylitol + NAD(+) = D-xylose + NADH + H(+). It catalyses the reaction xylitol + NADP(+) = D-xylose + NADPH + H(+). Its pathway is carbohydrate metabolism; D-xylose degradation. NADP(+) is a potent inhibitor of both the NADPH- and NADH-linked xylose reduction, whereas NAD(+) showS strong inhibition only with the NADH-linked reaction. Functionally, reduces D-xylose into xylitol. Has a preference for NADPH, but can also utilize NADH as cosubstrate. This Scheffersomyces stipitis (strain ATCC 58785 / CBS 6054 / NBRC 10063 / NRRL Y-11545) (Yeast) protein is NAD(P)H-dependent D-xylose reductase (XYL1).